A 448-amino-acid chain; its full sequence is tRNA modification GTPase MnmE (448 aa).

(6S)-5-formyl-5,6,7,8-tetrahydrofolate contacts are provided by arginine 24, glutamate 81, and lysine 120. The region spanning 216–373 (GLNVVLVGAP…LKRTLLREAG (158 aa)) is the TrmE-type G domain. Asparagine 226 contacts K(+). GTP contacts are provided by residues 226–231 (NVGKSS), 245–251 (TDIAGTT), and 270–273 (DTAG). Serine 230 serves as a coordination point for Mg(2+). K(+) is bound by residues threonine 245, isoleucine 247, and threonine 250. Threonine 251 lines the Mg(2+) pocket. Lysine 448 provides a ligand contact to (6S)-5-formyl-5,6,7,8-tetrahydrofolate.

This sequence belongs to the TRAFAC class TrmE-Era-EngA-EngB-Septin-like GTPase superfamily. TrmE GTPase family. As to quaternary structure, homodimer. Heterotetramer of two MnmE and two MnmG subunits. K(+) serves as cofactor.

The protein localises to the cytoplasm. Exhibits a very high intrinsic GTPase hydrolysis rate. Involved in the addition of a carboxymethylaminomethyl (cmnm) group at the wobble position (U34) of certain tRNAs, forming tRNA-cmnm(5)s(2)U34. The polypeptide is tRNA modification GTPase MnmE (Neisseria meningitidis serogroup B (strain ATCC BAA-335 / MC58)).